The primary structure comprises 1042 residues: Putative type I restriction enzyme MjaIXP endonuclease subunit (1042 aa).

Residues 323 to 487 (GETPEDRRIG…FLVFGDYISA (165 aa)) enclose the Helicase ATP-binding domain. The DEAH box motif lies at 439–442 (DEAH). Residues 551-731 (LTEDYLSKVS…DIKVVIEEMK (181 aa)) form the Helicase C-terminal domain.

Belongs to the HsdR family. The type I restriction/modification system is composed of three polypeptides R, M and S.

It catalyses the reaction Endonucleolytic cleavage of DNA to give random double-stranded fragments with terminal 5'-phosphates, ATP is simultaneously hydrolyzed.. The restriction (R) subunit of a type I restriction enzyme that recognizes 5'-CCAN(5)GTR-3' and cleaves a random distance away. The R subunit is required for both nuclease and ATPase activities, but not for modification. After locating a non-methylated recognition site, the enzyme complex serves as a molecular motor that translocates DNA in an ATP-dependent manner until a collision occurs that triggers cleavage. The chain is Putative type I restriction enzyme MjaIXP endonuclease subunit from Methanocaldococcus jannaschii (strain ATCC 43067 / DSM 2661 / JAL-1 / JCM 10045 / NBRC 100440) (Methanococcus jannaschii).